We begin with the raw amino-acid sequence, 179 residues long: Large ribosomal subunit protein uL5 (179 aa).

This sequence belongs to the universal ribosomal protein uL5 family. In terms of assembly, part of the 50S ribosomal subunit; part of the 5S rRNA/L5/L18/L25 subcomplex. Contacts the 5S rRNA and the P site tRNA. Forms a bridge to the 30S subunit in the 70S ribosome.

In terms of biological role, this is one of the proteins that bind and probably mediate the attachment of the 5S RNA into the large ribosomal subunit, where it forms part of the central protuberance. In the 70S ribosome it contacts protein S13 of the 30S subunit (bridge B1b), connecting the 2 subunits; this bridge is implicated in subunit movement. Contacts the P site tRNA; the 5S rRNA and some of its associated proteins might help stabilize positioning of ribosome-bound tRNAs. This chain is Large ribosomal subunit protein uL5, found in Shewanella denitrificans (strain OS217 / ATCC BAA-1090 / DSM 15013).